Reading from the N-terminus, the 356-residue chain is Uroporphyrinogen decarboxylase (356 aa).

Residues 27–31, Asp-77, Tyr-154, Thr-209, and His-327 contribute to the substrate site; that span reads RQAGR.

The protein belongs to the uroporphyrinogen decarboxylase family. As to quaternary structure, homodimer.

The protein resides in the cytoplasm. The enzyme catalyses uroporphyrinogen III + 4 H(+) = coproporphyrinogen III + 4 CO2. It participates in porphyrin-containing compound metabolism; protoporphyrin-IX biosynthesis; coproporphyrinogen-III from 5-aminolevulinate: step 4/4. Catalyzes the decarboxylation of four acetate groups of uroporphyrinogen-III to yield coproporphyrinogen-III. This is Uroporphyrinogen decarboxylase from Hahella chejuensis (strain KCTC 2396).